We begin with the raw amino-acid sequence, 320 residues long: MSEPMRSYLDFEKPVAELDSKIDELRALAASGSDIHEEVAKIEEKAVQALNELYATLTPWQKTQVARHPQRPHCVDYIEGLITEFTPLAGDRKFGEDEALIGGFGRFRGESICVIGQEKGSSTETRLKHNFGMARPEGYRKAVRLMDMADRFGIPVLSLVDTAGAYPGIGAEERGQAEAIARSTDACLSLGVPNVAVVIGEGGSGGAIAIATANKVLMLEHAIYSVISPEAASSILWRDGTKAQEAANSMKITAQDLLRFGVIDQILPEPKGGAHRDPAAMIATTGDAIAAAFAELAGLDAGTVRARRRQKFLEIGRKLG.

Residues 42-295 (IEEKAVQALN…GDAIAAAFAE (254 aa)) form the CoA carboxyltransferase C-terminal domain.

This sequence belongs to the AccA family. Acetyl-CoA carboxylase is a heterohexamer composed of biotin carboxyl carrier protein (AccB), biotin carboxylase (AccC) and two subunits each of ACCase subunit alpha (AccA) and ACCase subunit beta (AccD).

The protein resides in the cytoplasm. The catalysed reaction is N(6)-carboxybiotinyl-L-lysyl-[protein] + acetyl-CoA = N(6)-biotinyl-L-lysyl-[protein] + malonyl-CoA. It functions in the pathway lipid metabolism; malonyl-CoA biosynthesis; malonyl-CoA from acetyl-CoA: step 1/1. Component of the acetyl coenzyme A carboxylase (ACC) complex. First, biotin carboxylase catalyzes the carboxylation of biotin on its carrier protein (BCCP) and then the CO(2) group is transferred by the carboxyltransferase to acetyl-CoA to form malonyl-CoA. This Rhodopseudomonas palustris (strain HaA2) protein is Acetyl-coenzyme A carboxylase carboxyl transferase subunit alpha.